Consider the following 331-residue polypeptide: MAQLFYDSDADLSLLNGKTVAIVGYGSQGHAHALNLKDSGVDVVVGLYEGSRSAEKARTDGLEVLSVAEASAKADWIMVLLPDEFQKDVYAKEIAPHLSSGKVLSFAHGFNIRFGLIQPPADVDVVMIAPKGPGHTVRWEYQNGQGVPALFAIEQDASGQARALAMAYAKGIGGTRAGILETNFKEETETDLFGEQAVLCGGLSELVKAGFETLVEAGYQPELAYFECLHEVKLIVDLMVKGGLTAMRDSISNTAEYGDYVSGPRLINADTKAEMKRILADIQDGTFAKNFVAECESGKPEMKKIRDRDAAHPIEQVGKGLRAMFSWLKTA.

Positions 2 to 182 constitute a KARI N-terminal Rossmann domain; it reads AQLFYDSDAD…GGTRAGILET (181 aa). NADP(+)-binding positions include 25–28, S51, S53, and 83–86; these read YGSQ and DEFQ. H108 is a catalytic residue. Residue G134 participates in NADP(+) binding. The KARI C-terminal knotted domain occupies 183–328; it reads NFKEETETDL…KGLRAMFSWL (146 aa). D191, E195, E227, and E231 together coordinate Mg(2+). S252 serves as a coordination point for substrate.

Belongs to the ketol-acid reductoisomerase family. Mg(2+) is required as a cofactor.

The enzyme catalyses (2R)-2,3-dihydroxy-3-methylbutanoate + NADP(+) = (2S)-2-acetolactate + NADPH + H(+). It carries out the reaction (2R,3R)-2,3-dihydroxy-3-methylpentanoate + NADP(+) = (S)-2-ethyl-2-hydroxy-3-oxobutanoate + NADPH + H(+). Its pathway is amino-acid biosynthesis; L-isoleucine biosynthesis; L-isoleucine from 2-oxobutanoate: step 2/4. It participates in amino-acid biosynthesis; L-valine biosynthesis; L-valine from pyruvate: step 2/4. Its function is as follows. Involved in the biosynthesis of branched-chain amino acids (BCAA). Catalyzes an alkyl-migration followed by a ketol-acid reduction of (S)-2-acetolactate (S2AL) to yield (R)-2,3-dihydroxy-isovalerate. In the isomerase reaction, S2AL is rearranged via a Mg-dependent methyl migration to produce 3-hydroxy-3-methyl-2-ketobutyrate (HMKB). In the reductase reaction, this 2-ketoacid undergoes a metal-dependent reduction by NADPH to yield (R)-2,3-dihydroxy-isovalerate. The chain is Ketol-acid reductoisomerase (NADP(+)) from Prochlorococcus marinus (strain MIT 9303).